The sequence spans 303 residues: Dihydroorotate dehydrogenase B (NAD(+)), catalytic subunit (303 aa).

FMN is bound by residues Ser21 and 45-46; that span reads KG. Residues Lys45 and 69–73 contribute to the substrate site; that span reads NAVGL. FMN-binding residues include Asn99 and Asn127. Substrate is bound at residue Asn127. Cys130 serves as the catalytic Nucleophile. FMN-binding residues include Lys165 and Ile191. 192–193 contacts substrate; that stretch reads NT. FMN-binding positions include Gly217, 243 to 244, and 265 to 266; these read GG and GT.

This sequence belongs to the dihydroorotate dehydrogenase family. Type 1 subfamily. As to quaternary structure, heterotetramer of 2 PyrK and 2 PyrD type B subunits. It depends on FMN as a cofactor.

The protein resides in the cytoplasm. The enzyme catalyses (S)-dihydroorotate + NAD(+) = orotate + NADH + H(+). It participates in pyrimidine metabolism; UMP biosynthesis via de novo pathway; orotate from (S)-dihydroorotate (NAD(+) route): step 1/1. Catalyzes the conversion of dihydroorotate to orotate with NAD(+) as electron acceptor. The polypeptide is Dihydroorotate dehydrogenase B (NAD(+)), catalytic subunit (pyrD) (Phocaeicola vulgatus (strain ATCC 8482 / DSM 1447 / JCM 5826 / CCUG 4940 / NBRC 14291 / NCTC 11154) (Bacteroides vulgatus)).